The sequence spans 883 residues: Aldehyde-alcohol dehydrogenase (883 aa).

The interval 13 to 456 (KLVAEKHVDE…DNVSAINLLN (444 aa)) is aldehyde dehydrogenase. Residues 121–126 (ITPTTN), glycine 206, and glycine 224 each bind NAD(+). Catalysis depends on cysteine 257, which acts as the Nucleophile. NAD(+) is bound by residues glutamate 355, leucine 435, and 438 to 443 (GSYGRN). The tract at residues 457–464 (IKKVGRRR) is linker. NAD(+)-binding positions include aspartate 500, aspartate 534, 561–565 (GSPMD), 612–613 (TT), valine 625, lysine 634, and leucine 653. Fe cation-binding residues include aspartate 668, histidine 672, histidine 736, and histidine 750.

It in the N-terminal section; belongs to the aldehyde dehydrogenase family. The protein in the C-terminal section; belongs to the iron-containing alcohol dehydrogenase family. Fe(2+) serves as cofactor.

The enzyme catalyses an aldehyde + NAD(+) + H2O = a carboxylate + NADH + 2 H(+). The catalysed reaction is ethanol + NAD(+) = acetaldehyde + NADH + H(+). Functionally, has alcohol dehydrogenase activity. Has aldehyde dehydrogenase activity. Plays a role in enhancing virulence in mice, under ethanol stress conditions, perhaps by inducing expression of pneumolysin (Ply) and increasing production of hydrogen peroxide H(2)O(2). May be considered a potential virulence factor. In Streptococcus pneumoniae serotype 2 (strain D39 / NCTC 7466), this protein is Aldehyde-alcohol dehydrogenase.